The primary structure comprises 257 residues: 1-(5-phosphoribosyl)-5-[(5-phosphoribosylamino)methylideneamino] imidazole-4-carboxamide isomerase (257 aa).

D8 serves as the catalytic Proton acceptor. The active-site Proton donor is the D129.

This sequence belongs to the HisA/HisF family.

Its subcellular location is the cytoplasm. The enzyme catalyses 1-(5-phospho-beta-D-ribosyl)-5-[(5-phospho-beta-D-ribosylamino)methylideneamino]imidazole-4-carboxamide = 5-[(5-phospho-1-deoxy-D-ribulos-1-ylimino)methylamino]-1-(5-phospho-beta-D-ribosyl)imidazole-4-carboxamide. It functions in the pathway amino-acid biosynthesis; L-histidine biosynthesis; L-histidine from 5-phospho-alpha-D-ribose 1-diphosphate: step 4/9. This is 1-(5-phosphoribosyl)-5-[(5-phosphoribosylamino)methylideneamino] imidazole-4-carboxamide isomerase from Rippkaea orientalis (strain PCC 8801 / RF-1) (Cyanothece sp. (strain PCC 8801)).